The following is a 384-amino-acid chain: G protein-coupled receptor 88 (384 aa).

The Extracellular portion of the chain corresponds to 1–35 (MTNSSSTSTSSTTGGSLLLLCEEEESWAGRRIPVS). The N-linked (GlcNAc...) asparagine glycan is linked to asparagine 3. The chain crosses the membrane as a helical span at residues 36-56 (LLYSGLAIGGTLANGMVIYLV). At 57–73 (SSFRKLQTTSNAFIVNG) the chain is on the cytoplasmic side. Residues 74 to 94 (CAADLSVCALWMPQEAVLGLL) traverse the membrane as a helical segment. Over 95 to 116 (PTGSAEPPADWDGAGGSYRLLR) the chain is Extracellular. A helical membrane pass occupies residues 117–136 (GGLLGLGLTVSLLSHCLVAL). The Cytoplasmic portion of the chain corresponds to 137 to 158 (NRYLLITRAPATYQALYQRRHT). The helical transmembrane segment at 159 to 179 (AGMLALSWALALGLVLLLPPW) threads the bilayer. Residues 180–195 (APRPGAAPPRVHYPAL) lie on the Extracellular side of the membrane. Residues 196-216 (LAAAALLAQTALLLHCYLGIV) traverse the membrane as a helical segment. Residues 217-285 (RRVRVSVKRV…RAQRRLSGLS (69 aa)) are Cytoplasmic-facing. Residues 286-306 (VLLLCCVFLLATQPLVWVSLA) traverse the membrane as a helical segment. Over 307-310 (SGFS) the chain is Extracellular. A helical transmembrane segment spans residues 311–331 (LPVPWGVQAASWLLCCALSAL). The Cytoplasmic portion of the chain corresponds to 332–384 (NPLLYTWRNEEFRRSVRSVLPGVGDAAAAAVAATAVPAVSQAQLGTRAAGQHW).

It belongs to the G-protein coupled receptor 1 family. In terms of tissue distribution, expressed predominantly in the striatum.

Its subcellular location is the cell membrane. It is found in the cell projection. The protein localises to the cilium membrane. The protein resides in the cytoplasm. It localises to the nucleus. Orphan G protein-coupled receptor implicated in a large repertoire of behavioral responses that engage motor activities, spatial learning, and emotional processing. May play a role in the regulation of cognitive and motor function. Couples with the heterotrimeric G protein complex of the G(i) subfamily, consisting of GNAI1, GNB1 and GNG2, thereby acting through a G(i)-mediated pathway. Plays a role in the attenuation of D1 dopamine receptor (D1R)-mediated cAMP response in ciliated cells. In non-ciliated cells, involved in the inhibition of the beta-2 adrenergic receptor (B2AR) response. This Homo sapiens (Human) protein is G protein-coupled receptor 88 (GPR88).